We begin with the raw amino-acid sequence, 1133 residues long: Myb-binding protein 1A (1133 aa).

4 disordered regions span residues 1 to 62 (MKSK…ENTA), 718 to 764 (PLSK…DAES), 924 to 943 (GEEHSEEDQENGKQPASRQA), and 1111 to 1133 (KKVAKQKKQAAAKPMVVEDEEST). Composition is skewed to basic and acidic residues over residues 20–35 (KAKEDRKRAKTQKSEA) and 50–60 (EKPAETEEKEN). Composition is skewed to acidic residues over residues 725 to 735 (GEEESDDELDK) and 744 to 762 (DDSEDEDEDEEEDEGEDDA).

It belongs to the MYBBP1A family. Interacts with nclb.

It is found in the cytoplasm. The protein resides in the nucleus. The protein localises to the nucleolus. Functionally, has a role in rRNA biogenesis, cell proliferation and tissue growth by contributing to the localization of nclb to the nucleolus. The chain is Myb-binding protein 1A from Drosophila melanogaster (Fruit fly).